The primary structure comprises 243 residues: Carboxy-S-adenosyl-L-methionine synthase (243 aa).

S-adenosyl-L-methionine is bound by residues Tyr-40, 65-67 (GCS), 90-91 (DN), 118-119 (DI), Asn-133, and Arg-200.

It belongs to the class I-like SAM-binding methyltransferase superfamily. Cx-SAM synthase family. In terms of assembly, homodimer.

It carries out the reaction prephenate + S-adenosyl-L-methionine = carboxy-S-adenosyl-L-methionine + 3-phenylpyruvate + H2O. In terms of biological role, catalyzes the conversion of S-adenosyl-L-methionine (SAM) to carboxy-S-adenosyl-L-methionine (Cx-SAM). The protein is Carboxy-S-adenosyl-L-methionine synthase of Shewanella woodyi (strain ATCC 51908 / MS32).